A 177-amino-acid chain; its full sequence is NADH-quinone oxidoreductase subunit B (177 aa).

Positions 53, 54, 118, and 148 each coordinate [4Fe-4S] cluster.

Belongs to the complex I 20 kDa subunit family. As to quaternary structure, NDH-1 is composed of 14 different subunits. Subunits NuoB, C, D, E, F, and G constitute the peripheral sector of the complex. [4Fe-4S] cluster is required as a cofactor.

The protein resides in the cell membrane. The catalysed reaction is a quinone + NADH + 5 H(+)(in) = a quinol + NAD(+) + 4 H(+)(out). In terms of biological role, NDH-1 shuttles electrons from NADH, via FMN and iron-sulfur (Fe-S) centers, to quinones in the respiratory chain. The immediate electron acceptor for the enzyme in this species is believed to be a menaquinone. Couples the redox reaction to proton translocation (for every two electrons transferred, four hydrogen ions are translocated across the cytoplasmic membrane), and thus conserves the redox energy in a proton gradient. This is NADH-quinone oxidoreductase subunit B from Anoxybacillus flavithermus (strain DSM 21510 / WK1).